Here is a 307-residue protein sequence, read N- to C-terminus: MKWERKDILGMKDLSVEEIHMILDTAESFLEVSARDIKKVPTLRGKTIINFFVEASTRTRTSFEIAGKRLSADTINISASASSLVKGETLADTARNLEAMNPDVIVIRHSCAGAPHMLAGLVRQSIINAGDGAHEHPSQALLDMMTIRNRKGGLSGLNVTIVGDIAHSRVARSNIYGLNKMGVCVTVAGPATMIPRDIQQLGVKVCFSLEEAILDADVIMMLRIQTEREQQNIFPSLREYSTFYCLNRENIKKAKKDVLVMHPGPVNRGVEISPEIADGVHSVILEQVTNGVAVRMALLYLLTGASS.

2 residues coordinate carbamoyl phosphate: Arg-58 and Thr-59. Position 86 (Lys-86) interacts with L-aspartate. Carbamoyl phosphate contacts are provided by Arg-108, His-136, and Gln-139. 2 residues coordinate L-aspartate: Arg-169 and Arg-223. Gly-264 and Pro-265 together coordinate carbamoyl phosphate.

The protein belongs to the aspartate/ornithine carbamoyltransferase superfamily. ATCase family. In terms of assembly, heterododecamer (2C3:3R2) of six catalytic PyrB chains organized as two trimers (C3), and six regulatory PyrI chains organized as three dimers (R2).

The catalysed reaction is carbamoyl phosphate + L-aspartate = N-carbamoyl-L-aspartate + phosphate + H(+). It participates in pyrimidine metabolism; UMP biosynthesis via de novo pathway; (S)-dihydroorotate from bicarbonate: step 2/3. Catalyzes the condensation of carbamoyl phosphate and aspartate to form carbamoyl aspartate and inorganic phosphate, the committed step in the de novo pyrimidine nucleotide biosynthesis pathway. This is Aspartate carbamoyltransferase catalytic subunit from Syntrophus aciditrophicus (strain SB).